An 87-amino-acid chain; its full sequence is DNA-directed RNA polymerase subunit omega (87 aa).

The protein belongs to the RNA polymerase subunit omega family. As to quaternary structure, the RNAP catalytic core consists of 2 alpha, 1 beta, 1 beta' and 1 omega subunit. When a sigma factor is associated with the core the holoenzyme is formed, which can initiate transcription.

It carries out the reaction RNA(n) + a ribonucleoside 5'-triphosphate = RNA(n+1) + diphosphate. Its function is as follows. Promotes RNA polymerase assembly. Latches the N- and C-terminal regions of the beta' subunit thereby facilitating its interaction with the beta and alpha subunits. This Pseudomonas fluorescens (strain Pf0-1) protein is DNA-directed RNA polymerase subunit omega.